Reading from the N-terminus, the 364-residue chain is tRNA 2-selenouridine synthase (364 aa).

Residues 14–137 (LLADTPLIDV…LRQTAIQATW (124 aa)) form the Rhodanese domain. Cys-97 functions as the S-selanylcysteine intermediate in the catalytic mechanism.

It belongs to the SelU family. As to quaternary structure, monomer.

It carries out the reaction 5-methylaminomethyl-2-thiouridine(34) in tRNA + selenophosphate + (2E)-geranyl diphosphate + H2O + H(+) = 5-methylaminomethyl-2-selenouridine(34) in tRNA + (2E)-thiogeraniol + phosphate + diphosphate. The catalysed reaction is 5-methylaminomethyl-2-thiouridine(34) in tRNA + (2E)-geranyl diphosphate = 5-methylaminomethyl-S-(2E)-geranyl-thiouridine(34) in tRNA + diphosphate. The enzyme catalyses 5-methylaminomethyl-S-(2E)-geranyl-thiouridine(34) in tRNA + selenophosphate + H(+) = 5-methylaminomethyl-2-(Se-phospho)selenouridine(34) in tRNA + (2E)-thiogeraniol. It catalyses the reaction 5-methylaminomethyl-2-(Se-phospho)selenouridine(34) in tRNA + H2O = 5-methylaminomethyl-2-selenouridine(34) in tRNA + phosphate. Functionally, involved in the post-transcriptional modification of the uridine at the wobble position (U34) of tRNA(Lys), tRNA(Glu) and tRNA(Gln). Catalyzes the conversion of 2-thiouridine (S2U-RNA) to 2-selenouridine (Se2U-RNA). Acts in a two-step process involving geranylation of 2-thiouridine (S2U) to S-geranyl-2-thiouridine (geS2U) and subsequent selenation of the latter derivative to 2-selenouridine (Se2U) in the tRNA chain. This chain is tRNA 2-selenouridine synthase, found in Salmonella gallinarum (strain 287/91 / NCTC 13346).